The primary structure comprises 239 residues: Gag polyprotein (239 aa).

Residues 124-141 (KGEEVGETTAQRDAKMAP) show a composition bias toward basic and acidic residues. The tract at residues 124–144 (KGEEVGETTAQRDAKMAPEKM) is disordered. The PPXY motif motif lies at 172 to 175 (PPPY). Residues 184–214 (LAGVGEQQGQGGDTPWGAEQPRAEPGHAGLA) are disordered.

Its subcellular location is the virion. The sequence is that of Gag polyprotein (ev-1) from Galliformes.